The following is a 277-amino-acid chain: MHTMTTLLKKMNEQEKLVMLTAYDYPSAKLAESAGVDLILVGDSLGMVVLGYDSTIPVTMEDMLHHSKAVRRGAQHTFVVVDMPFASYHGDFDRTLQAASRLFQEGRADAIKLEGAGDVLQTIERLTQVGMPCVAHLGLTPQSVGVLEGYKVQGKSLEAAETLLQDSLAAERAGAKMLVLECVPHQLAKRIAEELTIPVIGIGAGADVDGQVLVYHDVLKYGVDRLPKFVQAYADLNEVATDAIRSYVEETKNGHFPQERHTFTMDESLLDSLYGGK.

Mg(2+)-binding residues include D43 and D82. 3-methyl-2-oxobutanoate-binding positions include 43-44 (DS), D82, and K112. Position 114 (E114) interacts with Mg(2+). E181 acts as the Proton acceptor in catalysis.

The protein belongs to the PanB family. Homodecamer; pentamer of dimers. The cofactor is Mg(2+).

Its subcellular location is the cytoplasm. It carries out the reaction 3-methyl-2-oxobutanoate + (6R)-5,10-methylene-5,6,7,8-tetrahydrofolate + H2O = 2-dehydropantoate + (6S)-5,6,7,8-tetrahydrofolate. It participates in cofactor biosynthesis; (R)-pantothenate biosynthesis; (R)-pantoate from 3-methyl-2-oxobutanoate: step 1/2. Catalyzes the reversible reaction in which hydroxymethyl group from 5,10-methylenetetrahydrofolate is transferred onto alpha-ketoisovalerate to form ketopantoate. In Exiguobacterium sp. (strain ATCC BAA-1283 / AT1b), this protein is 3-methyl-2-oxobutanoate hydroxymethyltransferase.